Here is a 2045-residue protein sequence, read N- to C-terminus: Host cell factor 1 (2045 aa).

A2 carries the N-acetylalanine modification. Residue S6 is modified to Phosphoserine. 5 Kelch repeats span residues 44–89 (LIVV…GFVC), 93–140 (RLLV…RLGH), 148–194 (KCYL…ITYG), 217–265 (KLVI…TIGN), and 266–313 (KMYV…LMDT). Residues K105, K163, and K244 each participate in a glycyl lysine isopeptide (Lys-Gly) (interchain with G-Cter in ubiquitin) cross-link. A Glycyl lysine isopeptide (Lys-Gly) (interchain with G-Cter in SUMO2) cross-link involves residue K282. The residue at position 288 (K288) is an N6-acetyllysine. A Glycyl lysine isopeptide (Lys-Gly) (interchain with G-Cter in ubiquitin) cross-link involves residue K363. The region spanning 366–457 (PPARVQLVRA…VPQAATAPPS (92 aa)) is the Fibronectin type-III 1 domain. The tract at residues 407–434 (ATATSPTPNPVPSVPANPPKSPAPAAAA) is disordered. At S411 the chain carries Phosphoserine. The span at 413-428 (TPNPVPSVPANPPKSP) shows a compositional bias: pro residues. Positions 500–550 (LVTMRPASQAGKAPVTVTSLPASVRMVVPTQSAQGTVIGSNPQMSGMAALA) are required for interaction with OGT. Omega-N-methylarginine is present on residues R504 and R524. Residues S598, S666, and S669 each carry the phosphoserine modification. Residues 610-722 (LKTAAAQVGT…KGPLPAGTIL (113 aa)) form an interaction with SIN3A region. The interval 750-902 (ILGISSVSPS…SLAGAGAHST (153 aa)) is interaction with ZBTB17. K813 carries the post-translational modification N6-acetyllysine. The segment at 813 to 912 (KIITAVPKIA…SASLATPITT (100 aa)) is interaction with GABP2. HCF repeat repeat units follow at residues 1010-1035 (TLVC…TVVA), 1072-1097 (VRVC…ATSN), and 1101-1126 (QHGC…AMSS). The HCF repeat 4; degenerate repeat unit spans residues 1157-1182 (VQGTVKPQCQTQQTNMTTTTMTVQAT). S1204 bears the Phosphoserine mark. Asymmetric dimethylarginine is present on R1216. Disordered regions lie at residues 1219-1242 (LSGP…YTTN), 1302-1375 (PCET…TSTG), 1444-1475 (TVTS…STNI), and 1494-1525 (TTVT…QLPP). A Phosphoserine modification is found at S1223. HCF repeat repeat units follow at residues 1295-1320 (TQVC…SNAG) and 1323-1348 (QRVC…ATSN). Low complexity predominate over residues 1308 to 1321 (TGTTNTATTSNAGS). An HCF repeat 7; degenerate repeat occupies 1358–1383 (QQPASGHPCETHQTTSTGTTMSVSVG). An HCF repeat 8 repeat occupies 1423–1448 (QRVCSNPPCETHETGTTHTATTVTSN). At T1500 the chain carries Phosphothreonine. Residues 1502-1511 (VPGPSVPPPE) are compositionally biased toward pro residues. Phosphoserine is present on residues S1506, S1516, and S1781. Fibronectin type-III domains follow at residues 1808 to 1898 (PPPP…TCLP) and 1900 to 2016 (FPGA…TSKD). Glycyl lysine isopeptide (Lys-Gly) (interchain with G-Cter in ubiquitin) cross-links involve residues K1817 and K1818. Phosphoserine is present on S1848. The tract at residues 2004-2045 (ATQVRWLQETSKDSSGTKPASKRPMSSPEMKSAPKKSKADGQ) is disordered. At K2015 the chain carries N6-acetyllysine. Residue K2034 forms a Glycyl lysine isopeptide (Lys-Gly) (interchain with G-Cter in SUMO2) linkage.

In terms of assembly, composed predominantly of six polypeptides ranging from 110 to 150 kDa and a minor 300 kDa polypeptide. The majority of N- and C-terminal cleavage products remain tightly, albeit non-covalently, associated. Interacts with POU2F1, CREB3, ZBTB17, EGR2, E2F4, CREBZF, SP1, GABP2, Sin3 HDAC complex (SIN3A, HDAC1, HDAC2, SUDS3), SAP30, SIN3B and FHL2. Component of a MLL1 complex, composed of at least the core components KMT2A/MLL1, ASH2L, HCFC1, WDR5 and RBBP5, as well as the facultative components BACC1, CHD8, DPY30, E2F6, HCFC2, HSP70, INO80C, KANSL1, LAS1L, MAX, MCRS1, MEN1, MGA, KAT8, PELP1, PHF20, PRP31, RING2, RUVBL1, RUVBL2, SENP3, TAF1, TAF4, TAF6, TAF7, TAF9 and TEX10. Component of a THAP1/THAP3-HCFC1-OGT complex that is required for the regulation of the transcriptional activity of RRM1. Interacts directly with THAP3 (via its HBM). Interacts (via the Kelch-repeat domain) with THAP1 (via the HBM); the interaction recruits HCHC1 to the RRM1. Interacts with THAP7 and THAP11 (via the HMB). Interacts directly with OGT; the interaction, which requires the HCFC1 cleavage site domain, glycosylates and promotes the proteolytic processing of HCFC1 and retains OGT in the nucleus. Component of the SET1 complex, at least composed of the catalytic subunit (SETD1A or SETD1B), WDR5, WDR82, RBBP5, ASH2L, CXXC1, HCFC1 and DPY30. Component of the NSL complex at least composed of MOF/KAT8, KANSL1, KANSL2, KANSL3, MCRS1, PHF20, OGT1/OGT, WDR5 and HCFC1. Component of a complex at least composed of ZNF335, HCFC1, CCAR2, EMSY, MKI67, RBBP5, ASH2L and WDR5; the complex is formed as a result of interactions between components of a nuclear receptor-mediated transcription complex and a histone methylation complex. Within the complex interacts with ZNF335. Interacts with TET2 and TET3. Interacts with HCFC1R1. Interacts with THAP11. Interacts (via Kelch domain) with KMT2E (via HBM motif). Interacts with E2F1. Accessory scaffold component of the polycomb repressive deubiquitinase (PR-DUB) complex, at least composed of BAP1, one of ASXL1, ASXL2 or (probably) ASXL3 and one of MBD5 or MBD6; the PR-DUB core associates with a number of accessory proteins, including FOXK1, FOXK2, KDM1B, HCFC1, YY1 and OGT. Interacts with YY1 (via Gly-rich region); the interaction is direct. Interacts with BAP1 (via HBM-like motif). Proteolytically cleaved at one or several PPCE--THET sites within the HCF repeats. Further cleavage of the primary N- and C-terminal chains results in a 'trimming' and accumulation of the smaller chains. Cleavage is promoted by O-glycosylation. Post-translationally, O-glycosylated. GlcNAcylation by OGT promotes proteolytic processing. In terms of processing, ubiquitinated. Lys-1817 and Lys-1818 are ubiquitinated both via 'Lys-48'- and 'Lys-63'-linked polyubiquitin chains. BAP1 mediated deubiquitination of 'Lys-48'-linked polyubiquitin chains; deubiquitination by BAP1 does not seem to stabilize the protein. As to expression, expressed in liver, pituitary gland, skeletal muscle, kidney, eye and brain (at protein level). Also observed at low level in heart, spleen and lung.

It is found in the nucleus. It localises to the cytoplasm. In terms of biological role, transcriptional coregulator. Serves as a scaffold protein, bridging interactions between transcription factors, including THAP11 and ZNF143, and transcriptional coregulators. Involved in control of the cell cycle. Also antagonizes transactivation by ZBTB17 and GABP2; represses ZBTB17 activation of the p15(INK4b) promoter and inhibits its ability to recruit p300. Coactivator for EGR2 and GABP2. Tethers the chromatin modifying Set1/Ash2 histone H3 'Lys-4' methyltransferase (H3K4me) and Sin3 histone deacetylase (HDAC) complexes (involved in the activation and repression of transcription respectively) together. As part of the NSL complex it may be involved in acetylation of nucleosomal histone H4 on several lysine residues. Recruits KMT2E to E2F1 responsive promoters promoting transcriptional activation and thereby facilitates G1 to S phase transition. Modulates expression of homeobox protein PDX1, perhaps acting in concert with transcription factor E2F1, thereby regulating pancreatic beta-cell growth and glucose-stimulated insulin secretion. May negatively modulate transcriptional activity of FOXO3. The sequence is that of Host cell factor 1 from Mus musculus (Mouse).